A 326-amino-acid chain; its full sequence is Ketol-acid reductoisomerase (NADP(+)) (326 aa).

The KARI N-terminal Rossmann domain occupies 2-182 (AKIYGDEDAS…GFTRAGVIKT (181 aa)). NADP(+) contacts are provided by residues 25 to 28 (YGSQ), Arg-48, Ser-53, and 83 to 86 (DEVQ). Residue His-108 is part of the active site. NADP(+) is bound at residue Gly-134. Residues 183-325 (TFREEVETDL…ERLRKMMGFE (143 aa)) form the KARI C-terminal knotted domain. Mg(2+) contacts are provided by Asp-191, Glu-195, Glu-227, and Glu-231. A substrate-binding site is contributed by Ser-252.

This sequence belongs to the ketol-acid reductoisomerase family. The cofactor is Mg(2+).

The enzyme catalyses (2R)-2,3-dihydroxy-3-methylbutanoate + NADP(+) = (2S)-2-acetolactate + NADPH + H(+). It carries out the reaction (2R,3R)-2,3-dihydroxy-3-methylpentanoate + NADP(+) = (S)-2-ethyl-2-hydroxy-3-oxobutanoate + NADPH + H(+). It participates in amino-acid biosynthesis; L-isoleucine biosynthesis; L-isoleucine from 2-oxobutanoate: step 2/4. Its pathway is amino-acid biosynthesis; L-valine biosynthesis; L-valine from pyruvate: step 2/4. In terms of biological role, involved in the biosynthesis of branched-chain amino acids (BCAA). Catalyzes an alkyl-migration followed by a ketol-acid reduction of (S)-2-acetolactate (S2AL) to yield (R)-2,3-dihydroxy-isovalerate. In the isomerase reaction, S2AL is rearranged via a Mg-dependent methyl migration to produce 3-hydroxy-3-methyl-2-ketobutyrate (HMKB). In the reductase reaction, this 2-ketoacid undergoes a metal-dependent reduction by NADPH to yield (R)-2,3-dihydroxy-isovalerate. The polypeptide is Ketol-acid reductoisomerase (NADP(+)) (Methanopyrus kandleri (strain AV19 / DSM 6324 / JCM 9639 / NBRC 100938)).